The sequence spans 449 residues: MGRMFGTDGVRGIANKELTADLAYKLGKAGAFILTEGTHRPKILVGMDTRISGDMLESALVAGILSVGAEAICVGVIPTPAIAYLTRKYNADAGVVISASHNPVEYNGIKFFNKNGYKLSDELEDNIQALIENNFKDVPVLTGENIGRKIEEDGEAIRDYIDFAKSTIKGDLKGLKVALDCANGASYITSVEAFKELGAEVHVINNKPDGININRNSGSTHPEDLIEYVVKNSCQIGLAFDGDADRCLAIDEKGNLINGDFILAICGKELKKQGRLKKNTIVVTVMSNLGLDIAMKKEEINTIKTKVGDRYVLEEMLRNDYAIGGEQSGHIIFSDYNTTGDGLVTALQLAHIVKESGKTFSELCSIMKELPQVLVNAKVPNDQKDIYLKDEEIKSEIDTITKNLDGSGRVLIRPSGTEPLVRVMLEGENQGEIDKLAHGLAKLIEKKVK.

Ser100 (phosphoserine intermediate) is an active-site residue. Residues Ser100, Asp241, Asp243, and Asp245 each contribute to the Mg(2+) site. Ser100 is modified (phosphoserine).

This sequence belongs to the phosphohexose mutase family. Mg(2+) is required as a cofactor. Activated by phosphorylation.

The enzyme catalyses alpha-D-glucosamine 1-phosphate = D-glucosamine 6-phosphate. Catalyzes the conversion of glucosamine-6-phosphate to glucosamine-1-phosphate. This chain is Phosphoglucosamine mutase, found in Clostridium botulinum (strain Loch Maree / Type A3).